Consider the following 540-residue polypeptide: Cytochrome P450 monooxygenase ORF5 (540 aa).

The helical transmembrane segment at 48–68 (YHALGTAIALFACACAYALVA) threads the bilayer. Residues asparagine 376 and asparagine 460 are each glycosylated (N-linked (GlcNAc...) asparagine). Heme is bound at residue cysteine 483.

This sequence belongs to the cytochrome P450 family. Requires heme as cofactor.

Its subcellular location is the membrane. It participates in sesquiterpene biosynthesis. In terms of biological role, cytochrome P450 monooxygenase; part of the gene cluster that mediates the biosynthesis of PR-toxin, a bicyclic sesquiterpene belonging to the eremophilane class and acting as a mycotoxin. The first step of the pathway is catalyzed by the aristolochene synthase which performs the cyclization of trans,trans-farnesyl diphosphate (FPP) to the bicyclic sesquiterpene aristolochene. Following the formation of aristolochene, the non-oxygenated aristolochene is converted to the trioxygenated intermediate eremofortin B, via 7-epi-neopetasone. This conversion appears to involve three enzymes, a hydroxysterol oxidase-like enzyme, the quinone-oxidase prx3 that forms the quinone-type-structure in the bicyclic nucleus of aristolochene with the C8-oxo group and the C-3 hydroxyl group, and the P450 monooxygenase ORF6 that introduces the epoxide at the double bond between carbons 1 and 2. No monoxy or dioxy-intermediates have been reported to be released to the broth, so these three early oxidative reactions may be coupled together. Eremofortin B is further oxidized by another P450 monooxygenase, that introduces a second epoxide between carbons 7 and 11 prior to acetylation to eremofortin A by the acetyltransferase ORF8. The second epoxidation may be performed by a second P450 monooxygenase. After the acetylation step, eremofortin A is converted to eremofortin C and then to PR-toxin. First the conversion of eremofortin A to eremofortin C proceeds by oxidation of the side chain of the molecule at C-12 and is catalyzed by the short-chain oxidoreductase prx1. The cytochrome P450 monooxygenase ORF6 is probably also involved in this step. The primary alcohol formed at C-12 is finally oxidized by the short-chain alcohol dehydrogenase prx4 that forms PR-toxin. This is Cytochrome P450 monooxygenase ORF5 from Penicillium roqueforti (strain FM164).